Here is a 61-residue protein sequence, read N- to C-terminus: Photosystem II reaction center protein K (61 aa).

The propeptide occupies 1-24 (MLNIFSLIWICLNSALYSSGFFFG). A helical transmembrane segment spans residues 36–56 (IIDFMPVIPVFFFLLAFVWQA).

This sequence belongs to the PsbK family. PSII is composed of 1 copy each of membrane proteins PsbA, PsbB, PsbC, PsbD, PsbE, PsbF, PsbH, PsbI, PsbJ, PsbK, PsbL, PsbM, PsbT, PsbX, PsbY, PsbZ, Psb30/Ycf12, at least 3 peripheral proteins of the oxygen-evolving complex and a large number of cofactors. It forms dimeric complexes.

It localises to the plastid. It is found in the chloroplast thylakoid membrane. Its function is as follows. One of the components of the core complex of photosystem II (PSII). PSII is a light-driven water:plastoquinone oxidoreductase that uses light energy to abstract electrons from H(2)O, generating O(2) and a proton gradient subsequently used for ATP formation. It consists of a core antenna complex that captures photons, and an electron transfer chain that converts photonic excitation into a charge separation. This is Photosystem II reaction center protein K from Coffea arabica (Arabian coffee).